Consider the following 483-residue polypeptide: Docking protein 1 (483 aa).

Position 1 is an N-acetylmethionine (Met1). The PH domain occupies 4–119; the sequence is AVMEGPLFLQ…WVQTLCQNAF (116 aa). At Ser48 the chain carries Phosphoserine. Positions 151–259 constitute an IRS-type PTB domain; it reads EGSQFWVTVQ…HRQKIQGKAG (109 aa). 2 positions are modified to phosphoserine: Ser269 and Ser291. The segment at 293–326 is disordered; the sequence is PALYSEPLDSLRIPPGPSQDSLYSDPLDSTPARA. Residues Tyr296, Tyr337, Tyr362, Tyr377, Tyr398, and Tyr409 each carry the phosphotyrosine modification. Residues 409–483 form a disordered region; sequence YAVPPPRSTK…RTGAKSEGST (75 aa). The segment covering 411–424 has biased composition (pro residues); the sequence is VPPPRSTKPFPAPK. Position 416 is a phosphoserine (Ser416). A compositionally biased stretch (polar residues) spans 434-460; sequence GAATGSGSQGHSSDTALYSQVQKSGAS. Tyr451 carries the post-translational modification Phosphotyrosine. Residue Ser462 is modified to Phosphoserine.

Belongs to the DOK family. Type A subfamily. In terms of assembly, interacts with RasGAP, INPP5D/SHIP1 and ABL1. Interacts directly with phosphorylated ITGB3. Interacts with SRMS (via the SH2 and SH3 domains). Constitutively tyrosine-phosphorylated. Phosphorylated by TEC. Phosphorylated by LYN. Phosphorylated on tyrosine residues by the insulin receptor kinase. Results in the negative regulation of the insulin signaling pathway. Phosphorylated on tyrosine residues by SRMS.

Its subcellular location is the cytoplasm. The protein resides in the nucleus. Functionally, DOK proteins are enzymatically inert adaptor or scaffolding proteins. They provide a docking platform for the assembly of multimolecular signaling complexes. DOK1 appears to be a negative regulator of the insulin signaling pathway. Modulates integrin activation by competing with talin for the same binding site on ITGB3. The sequence is that of Docking protein 1 (DOK1) from Bos taurus (Bovine).